We begin with the raw amino-acid sequence, 435 residues long: ATP-dependent protease ATPase subunit HslU (435 aa).

ATP contacts are provided by residues Ile18, 60-65, Asp248, Glu313, and Arg385; that span reads GVGKTE.

This sequence belongs to the ClpX chaperone family. HslU subfamily. In terms of assembly, a double ring-shaped homohexamer of HslV is capped on each side by a ring-shaped HslU homohexamer. The assembly of the HslU/HslV complex is dependent on binding of ATP.

It localises to the cytoplasm. Its function is as follows. ATPase subunit of a proteasome-like degradation complex; this subunit has chaperone activity. The binding of ATP and its subsequent hydrolysis by HslU are essential for unfolding of protein substrates subsequently hydrolyzed by HslV. HslU recognizes the N-terminal part of its protein substrates and unfolds these before they are guided to HslV for hydrolysis. The polypeptide is ATP-dependent protease ATPase subunit HslU (Rhizobium johnstonii (strain DSM 114642 / LMG 32736 / 3841) (Rhizobium leguminosarum bv. viciae)).